The following is a 309-amino-acid chain: Serine/threonine-protein phosphatase 2A catalytic subunit alpha isoform (309 aa).

Residues Asp57, His59, Asp85, and Asn117 each contribute to the Mn(2+) site. Asp57, His59, and Asp85 together coordinate Zn(2+). Residues Asp85 and Asn117 each contribute to the Fe(3+) site. His118 acts as the Proton donor in catalysis. Mn(2+) contacts are provided by His167 and His241. Positions 167 and 241 each coordinate Fe(3+). Residue Tyr307 is modified to Phosphotyrosine. Leu309 bears the Leucine methyl ester mark.

This sequence belongs to the PPP phosphatase family. PP-1 subfamily. In terms of assembly, PP2A consists of a common heterodimeric core enzyme composed of PPP2CA, a 36 kDa catalytic subunit (subunit C), and PPP2R1A, a 65 kDa constant regulatory subunit (PR65 or subunit A), that associates with a variety of regulatory subunits. Proteins that associate with the core dimer include three families of regulatory subunits B (the R2/B/PR55/B55, R3/B''/PR72/PR130/PR59 and R5/B'/B56 families), the 48 kDa variable regulatory subunit, viral proteins, and cell signaling molecules. Interacts with the PP2A A subunit PPP2R1A. Interacts with the regulatory subunit PPP2R2A. Interacts (via C-terminus) with PTPA. Interacts with NXN; the interaction is direct. Interacts with KCTD20. Interacts with BTBD10. Interacts with SGO1 and SGO2. Interacts with RAF1. Interaction with IGBP1 protects unassembled PPP2CA from degradative ubiquitination. Interacts with GSK3B (via C2 domain). Interacts with MFHAS1; retains PPP2CA into the cytoplasm and excludes it from the nucleus. Interacts with PABIR1/FAM122A. Interacts with ADCY8; interaction is phosphatase activity-dependent; antagonizes interaction between ADCY8 and calmodulin. Interacts with CRTC3 (when phosphorylated at 'Ser-391'). Interacts with SPRY2; the interaction is inhibited by TESK1 interaction with SPRY2, possibly by vesicular sequestration of SPRY2. Interacts with TRAF3IP3. Interacts with AMBRA1 (via PxP motifs); enhancing interaction between PPP2CA and MYC or FOXO3. Forms a complex with AMBRA1 and BECN1; AMBRA1 and BECN1 components of the complex regulate MYC stability via different pathways. Part of the core of STRIPAK complexes composed of PP2A catalytic and scaffolding subunits, the striatins (PP2A regulatory subunits), the striatin-associated proteins MOB4, STRIP1 and STRIP2, PDCD10 and members of the STE20 kinases, such as STK24 and STK26. Phosphatase component of the Integrator-PP2A (INTAC) complex, composed of the Integrator core complex and protein phosphatase 2A subunits PPP2CA and PPP2R1A. Requires Mn(2+) as cofactor. Fe(3+) serves as cofactor. Zn(2+) is required as a cofactor. In terms of processing, reversibly methyl esterified on Leu-309 by leucine carboxyl methyltransferase 1 (LCMT1) and protein phosphatase methylesterase 1 (PPME1). Carboxyl methylation influences the affinity of the catalytic subunit for the different regulatory subunits, thereby modulating the PP2A holoenzyme's substrate specificity, enzyme activity and cellular localization. Post-translationally, phosphorylation of either threonine (by autophosphorylation-activated protein kinase) or tyrosine results in inactivation of the phosphatase. Auto-dephosphorylation has been suggested as a mechanism for reactivation. Polyubiquitinated, leading to its degradation by the proteasome.

It is found in the cytoplasm. Its subcellular location is the nucleus. The protein resides in the chromosome. It localises to the centromere. The protein localises to the cytoskeleton. It is found in the spindle pole. It carries out the reaction O-phospho-L-seryl-[protein] + H2O = L-seryl-[protein] + phosphate. It catalyses the reaction O-phospho-L-threonyl-[protein] + H2O = L-threonyl-[protein] + phosphate. Its activity is regulated as follows. Inhibited by the interaction between PPP2R2A and ARPP19; this inhibition is enhanced when ARPP19 is phosphorylated. Inhibited by the interaction between PPP2R2A and PABIR1/FAM122A. Functionally, catalytic subunit of protein phosphatase 2A (PP2A), a serine/threonine phosphatase involved in the regulation of a wide variety of enzymes, signal transduction pathways, and cellular events. PP2A is the major phosphatase for microtubule-associated proteins (MAPs). PP2A can modulate the activity of phosphorylase B kinase casein kinase 2, mitogen-stimulated S6 kinase, and MAP-2 kinase. Cooperates with SGO2 to protect centromeric cohesin from separase-mediated cleavage in oocytes specifically during meiosis I. Can dephosphorylate various proteins, such as SV40 large T antigen, AXIN1, p53/TP53, PIM3, WEE1. Activates RAF1 by dephosphorylating it at 'Ser-259'. Mediates dephosphorylation of WEE1, preventing its ubiquitin-mediated proteolysis, increasing WEE1 protein levels, and promoting the G2/M checkpoint. Mediates dephosphorylation of MYC; promoting its ubiquitin-mediated proteolysis: interaction with AMBRA1 enhances interaction between PPP2CA and MYC. Mediates dephosphorylation of FOXO3; promoting its stabilization: interaction with AMBRA1 enhances interaction between PPP2CA and FOXO3. Catalyzes dephosphorylation of the pyrin domain of NLRP3, promoting assembly of the NLRP3 inflammasome. Together with RACK1 adapter, mediates dephosphorylation of AKT1 at 'Ser-473', preventing AKT1 activation and AKT-mTOR signaling pathway. Dephosphorylation of AKT1 is essential for regulatory T-cells (Treg) homeostasis and stability. Catalyzes dephosphorylation of PIM3, promotinh PIM3 ubiquitination and proteasomal degradation. Part of the striatin-interacting phosphatase and kinase (STRIPAK) complexes. STRIPAK complexes have critical roles in protein (de)phosphorylation and are regulators of multiple signaling pathways including Hippo, MAPK, nuclear receptor and cytoskeleton remodeling. Different types of STRIPAK complexes are involved in a variety of biological processes such as cell growth, differentiation, apoptosis, metabolism and immune regulation. Key mediator of a quality checkpoint during transcription elongation as part of the Integrator-PP2A (INTAC) complex. The INTAC complex drives premature transcription termination of transcripts that are unfavorably configured for transcriptional elongation: within the INTAC complex, PPP2CA catalyzes dephosphorylation of the C-terminal domain (CTD) of Pol II subunit POLR2A/RPB1 and SUPT5H/SPT5, thereby preventing transcriptional elongation. This Homo sapiens (Human) protein is Serine/threonine-protein phosphatase 2A catalytic subunit alpha isoform (PPP2CA).